Reading from the N-terminus, the 472-residue chain is 3-isopropylmalate dehydratase large subunit (472 aa).

3 residues coordinate [4Fe-4S] cluster: Cys-353, Cys-414, and Cys-417.

This sequence belongs to the aconitase/IPM isomerase family. LeuC type 1 subfamily. Heterodimer of LeuC and LeuD. [4Fe-4S] cluster is required as a cofactor.

The enzyme catalyses (2R,3S)-3-isopropylmalate = (2S)-2-isopropylmalate. It functions in the pathway amino-acid biosynthesis; L-leucine biosynthesis; L-leucine from 3-methyl-2-oxobutanoate: step 2/4. In terms of biological role, catalyzes the isomerization between 2-isopropylmalate and 3-isopropylmalate, via the formation of 2-isopropylmaleate. The protein is 3-isopropylmalate dehydratase large subunit of Psychrobacter cryohalolentis (strain ATCC BAA-1226 / DSM 17306 / VKM B-2378 / K5).